A 399-amino-acid polypeptide reads, in one-letter code: Mannan endo-1,4-beta-mannosidase 4 (399 aa).

The signal sequence occupies residues 1–26 (MNNSIILIFVAILIIFPNEFSKPTRA). Residues W88 and N203 each coordinate substrate. The active-site Proton donor is E204. A substrate-binding site is contributed by Y279. E318 serves as the catalytic Nucleophile. The cysteines at positions 347 and 354 are disulfide-linked. W360 serves as a coordination point for substrate.

This sequence belongs to the glycosyl hydrolase 5 (cellulase A) family. As to expression, expressed in flowers and fruit pericarp.

The protein localises to the secreted. The catalysed reaction is Random hydrolysis of (1-&gt;4)-beta-D-mannosidic linkages in mannans, galactomannans and glucomannans.. Functionally, possesses endo-beta-mannanase and mannan transglycosylase activities. May be involved in cell wall degradation during fruit ripening. The polypeptide is Mannan endo-1,4-beta-mannosidase 4 (MAN4) (Solanum lycopersicum (Tomato)).